The chain runs to 513 residues: Maturase K (513 aa).

It belongs to the intron maturase 2 family. MatK subfamily.

It localises to the plastid. It is found in the chloroplast. Functionally, usually encoded in the trnK tRNA gene intron. Probably assists in splicing its own and other chloroplast group II introns. The protein is Maturase K of Pinus resinosa (Red pine).